Reading from the N-terminus, the 1187-residue chain is BAI1-associated protein 3 (1187 aa).

The tract at residues 55-81 is disordered; that stretch reads SFRRRTEQDPGSASADPQEPATGAWKP. In terms of domain architecture, C2 1 spans 176 to 335; that stretch reads SLEEHTEAIE…VKSARANGTA (160 aa). The Ca(2+) site is built by Asp211, Asp217, Asp295, and Asp297. The MHD1 domain maps to 663–784; the sequence is FELYLTLADL…EATLFYTELL (122 aa). Residues 888 to 996 form the MHD2 domain; that stretch reads DEAVAPLMKY…CSTRECIEQF (109 aa). The region spanning 1010–1136 is the C2 2 domain; sequence RFGRLSVRCH…GVARPQVGGG (127 aa). Ca(2+)-binding residues include Leu1040, Asp1041, Asp1047, Asp1105, Asp1107, Ser1110, and Asp1113.

The protein belongs to the unc-13 family. As to quaternary structure, interacts with ADGRB1; this interaction is direct. Interacts with endosomal SNARE proteins VAMP3, VAMP4, STX6 and STX16; this interaction is increased in the presence of calcium. It depends on Ca(2+) as a cofactor. In terms of tissue distribution, predominantly expressed in brain. Also expressed in nonneural tissues such as breast and testes epithelium.

The protein localises to the cytoplasm. It localises to the cytosol. It is found in the recycling endosome membrane. The protein resides in the late endosome membrane. Its subcellular location is the golgi apparatus. The protein localises to the trans-Golgi network membrane. It localises to the cell membrane. Functions in endosome to Golgi retrograde transport. In response to calcium influx, may interact with SNARE fusion receptors and membrane phospholipids to mediate endosome fusion with the trans-Golgi network. By promoting the recycling of secretory vesicle transmembrane proteins, it indirectly controls dense-core secretory vesicle biogenesis, maturation and their ability to mediate the constitutive and regulated secretion of neurotransmitters and hormones. May regulate behavior and food intake by controlling calcium-stimulated exocytosis of neurotransmitters including NPY and serotonin and hormones like insulin. Proposed to play a role in hypothalamic neuronal firing by modulating gamma-aminobutyric acid (GABA)ergic inhibitory neurotransmission. This chain is BAI1-associated protein 3, found in Homo sapiens (Human).